We begin with the raw amino-acid sequence, 485 residues long: Glutamyl-tRNA(Gln) amidotransferase subunit A (485 aa).

Residues Lys79 and Ser154 each act as charge relay system in the active site. Ser178 acts as the Acyl-ester intermediate in catalysis.

Belongs to the amidase family. GatA subfamily. As to quaternary structure, heterotrimer of A, B and C subunits.

The catalysed reaction is L-glutamyl-tRNA(Gln) + L-glutamine + ATP + H2O = L-glutaminyl-tRNA(Gln) + L-glutamate + ADP + phosphate + H(+). Allows the formation of correctly charged Gln-tRNA(Gln) through the transamidation of misacylated Glu-tRNA(Gln) in organisms which lack glutaminyl-tRNA synthetase. The reaction takes place in the presence of glutamine and ATP through an activated gamma-phospho-Glu-tRNA(Gln). The protein is Glutamyl-tRNA(Gln) amidotransferase subunit A of Geobacillus stearothermophilus (Bacillus stearothermophilus).